The chain runs to 296 residues: Giardin subunit alpha-3 (296 aa).

Annexin repeat units follow at residues aspartate 3–tryptophan 72, glutamate 74–lysine 146, asparagine 153–tyrosine 222, and glycine 226–arginine 295.

It belongs to the annexin family. Giardin subunit alpha subfamily.

The protein localises to the cytoplasm. It is found in the cytoskeleton. Giardins are involved in parasite attachment to the intestinal mucosa and in the cytoskeletal disassembly and reassembly that marks the transition from infectious trophozoite to transmissible cyst. They may interact with other cytoskeletal proteins such as microtubules in the microribbons or crossbridges, to maintain the integrity of the ventral disk. In Giardia intestinalis (Giardia lamblia), this protein is Giardin subunit alpha-3.